Consider the following 338-residue polypeptide: tRNA N6-adenosine threonylcarbamoyltransferase (338 aa).

Fe cation contacts are provided by histidine 111 and histidine 115. Residues 134–138, aspartate 167, glycine 180, and asparagine 272 contribute to the substrate site; that span reads LVSGG. Aspartate 300 is a Fe cation binding site.

This sequence belongs to the KAE1 / TsaD family. Fe(2+) serves as cofactor.

Its subcellular location is the cytoplasm. The enzyme catalyses L-threonylcarbamoyladenylate + adenosine(37) in tRNA = N(6)-L-threonylcarbamoyladenosine(37) in tRNA + AMP + H(+). Required for the formation of a threonylcarbamoyl group on adenosine at position 37 (t(6)A37) in tRNAs that read codons beginning with adenine. Is involved in the transfer of the threonylcarbamoyl moiety of threonylcarbamoyl-AMP (TC-AMP) to the N6 group of A37, together with TsaE and TsaB. TsaD likely plays a direct catalytic role in this reaction. The protein is tRNA N6-adenosine threonylcarbamoyltransferase of Shewanella pealeana (strain ATCC 700345 / ANG-SQ1).